A 1071-amino-acid polypeptide reads, in one-letter code: MLRDGKNEGMSTIPGFNQIQFEGFCRFIDQGLTEELYKFPKIEDTDQEIEFQLFVETYQLVEPLIKERDAVYESLTYSSELYVSAGLIWKTGRDMQEQTIFFGNIPLMNSLGTSIVNGIYRIVINQVLQSPGIYYRSELDHNGISVYTGTIISDWGGRSELEIDRKARIWARVSRKQKISILVLSSAMGSNLREILENVCYPEIFLSFLTDKEKKKIGSKENAILEFYQQFACVGGDPVFSESLCKELQKKFFQQRCELGRIGRRNMNRRLNLDISQNNTFLLPRDILAAADHLIGMKFGMGTLDDMNHLKNKRIRSVADLLQDQFGLALVRLENVVRGTICGALRHKLIPTPQNLVTSTPLTTTYESFFGLHPLSQVLDRTNPLTQIVHGRKLSYLGPGGLTGRTASFRIRDIHPSHYGRICPIDTSEGINVGLIGSLAIHARIGRWGSLESPFYEISERSKGARMLYLSPGKDEYYMVAAGNSLALNQGIQEEQVVPARYRQEFLTIAWEQVHLRSIFSFQYFSIGASLIPFIEHNDANRALMSSNMQRQAVPLSRSEKCIVGTGLERQAAIDSGALAIAEHEGKIIYTDTDKILLSGNGNTLSIPLVIYQRSNKNTCMHQKPQVQRGKCIKKGQILAHGAATVGGELALGKNVLVAYMPWEGYNFEDAVLISERLVYEDIYTSFHIRKYEIKTHVTSQGPERVTNEIPHLEAHLLRNLDKNGIVMLGSWVETGDILVGKLTPQMVKESSYAPEDRLLRAILGIQVSTSKETCLKLPIGGRGRVIDVRWIQKRGGSSYNPEMIRVYISQKREIKVGDKVAGRHGNKGIISKILPRQDMPYLQDGRPVDMVFNPLGVPPRMNVGQIFECSLGLAGGLLDRHYRIAPFDERYEQEASRKLVFSELYEAGKQTANPWVFEPEYPGKSRIFDGRTGDPFEQPVIIGKPYILKLIHQVDDKIHGRSSGHYALVTQQPLRGRAKQGGQRVGEMEVWALEGFGVAHILQEMLTYKSDHIRARQEVLGTTIIGGTIPNPQDAPESFRLLVRELRSLALELNHFFVSEKNFQINRKEA.

Belongs to the RNA polymerase beta chain family. In terms of assembly, in plastids the minimal PEP RNA polymerase catalytic core is composed of four subunits: alpha, beta, beta', and beta''. When a (nuclear-encoded) sigma factor is associated with the core the holoenzyme is formed, which can initiate transcription.

The protein localises to the plastid. It localises to the chloroplast. It carries out the reaction RNA(n) + a ribonucleoside 5'-triphosphate = RNA(n+1) + diphosphate. Its function is as follows. DNA-dependent RNA polymerase catalyzes the transcription of DNA into RNA using the four ribonucleoside triphosphates as substrates. This chain is DNA-directed RNA polymerase subunit beta, found in Panax ginseng (Korean ginseng).